Here is a 198-residue protein sequence, read N- to C-terminus: Large ribosomal subunit protein uL13B (198 aa).

Ser2 bears the N-acetylserine; partial mark. The residue at position 43 (Ser43) is a Phosphoserine. Residue Lys176 forms a Glycyl lysine isopeptide (Lys-Gly) (interchain with G-Cter in ubiquitin) linkage. Ser181, Ser185, and Ser187 each carry phosphoserine.

The protein belongs to the universal ribosomal protein uL13 family. In terms of assembly, component of the large ribosomal subunit (LSU). Mature yeast ribosomes consist of a small (40S) and a large (60S) subunit. The 40S small subunit contains 1 molecule of ribosomal RNA (18S rRNA) and 33 different proteins (encoded by 57 genes). The large 60S subunit contains 3 rRNA molecules (25S, 5.8S and 5S rRNA) and 46 different proteins (encoded by 81 genes). In terms of processing, N-terminally acetylated by acetyltransferase NatA.

It localises to the cytoplasm. Component of the ribosome, a large ribonucleoprotein complex responsible for the synthesis of proteins in the cell. The small ribosomal subunit (SSU) binds messenger RNAs (mRNAs) and translates the encoded message by selecting cognate aminoacyl-transfer RNA (tRNA) molecules. The large subunit (LSU) contains the ribosomal catalytic site termed the peptidyl transferase center (PTC), which catalyzes the formation of peptide bonds, thereby polymerizing the amino acids delivered by tRNAs into a polypeptide chain. The nascent polypeptides leave the ribosome through a tunnel in the LSU and interact with protein factors that function in enzymatic processing, targeting, and the membrane insertion of nascent chains at the exit of the ribosomal tunnel. This is Large ribosomal subunit protein uL13B from Saccharomyces cerevisiae (strain ATCC 204508 / S288c) (Baker's yeast).